A 206-amino-acid polypeptide reads, in one-letter code: ATP-dependent dethiobiotin synthetase BioD (206 aa).

An ATP-binding site is contributed by 12–17 (DSGKTL). Thr-16 serves as a coordination point for Mg(2+). Lys-32 is a catalytic residue. Glu-99 is a Mg(2+) binding site. 99-102 (EGAG) is a binding site for ATP.

Belongs to the dethiobiotin synthetase family. In terms of assembly, homodimer. It depends on Mg(2+) as a cofactor.

The protein localises to the cytoplasm. It carries out the reaction (7R,8S)-7,8-diammoniononanoate + CO2 + ATP = (4R,5S)-dethiobiotin + ADP + phosphate + 3 H(+). Its pathway is cofactor biosynthesis; biotin biosynthesis; biotin from 7,8-diaminononanoate: step 1/2. Its function is as follows. Catalyzes a mechanistically unusual reaction, the ATP-dependent insertion of CO2 between the N7 and N8 nitrogen atoms of 7,8-diaminopelargonic acid (DAPA, also called 7,8-diammoniononanoate) to form a ureido ring. This is ATP-dependent dethiobiotin synthetase BioD from Cytophaga hutchinsonii (strain ATCC 33406 / DSM 1761 / CIP 103989 / NBRC 15051 / NCIMB 9469 / D465).